The chain runs to 334 residues: tRNA dimethylallyltransferase (334 aa).

G23–T30 is an ATP binding site. Residue T25–T30 coordinates substrate. 2 interaction with substrate tRNA regions span residues D53–L56 and Q177–R181.

Belongs to the IPP transferase family. Monomer. Requires Mg(2+) as cofactor.

The enzyme catalyses adenosine(37) in tRNA + dimethylallyl diphosphate = N(6)-dimethylallyladenosine(37) in tRNA + diphosphate. Functionally, catalyzes the transfer of a dimethylallyl group onto the adenine at position 37 in tRNAs that read codons beginning with uridine, leading to the formation of N6-(dimethylallyl)adenosine (i(6)A). In Polynucleobacter necessarius subsp. necessarius (strain STIR1), this protein is tRNA dimethylallyltransferase.